Here is a 147-residue protein sequence, read N- to C-terminus: 2-amino-4-hydroxy-6-hydroxymethyldihydropteridine pyrophosphokinase (147 aa).

Belongs to the HPPK family.

It carries out the reaction 6-hydroxymethyl-7,8-dihydropterin + ATP = (7,8-dihydropterin-6-yl)methyl diphosphate + AMP + H(+). Its pathway is cofactor biosynthesis; tetrahydrofolate biosynthesis; 2-amino-4-hydroxy-6-hydroxymethyl-7,8-dihydropteridine diphosphate from 7,8-dihydroneopterin triphosphate: step 4/4. Catalyzes the transfer of pyrophosphate from adenosine triphosphate (ATP) to 6-hydroxymethyl-7,8-dihydropterin, an enzymatic step in folate biosynthesis pathway. This is 2-amino-4-hydroxy-6-hydroxymethyldihydropteridine pyrophosphokinase (folK) from Porphyromonas gingivalis (strain ATCC 33277 / DSM 20709 / CIP 103683 / JCM 12257 / NCTC 11834 / 2561).